Here is a 316-residue protein sequence, read N- to C-terminus: 4-hydroxy-3-methylbut-2-enyl diphosphate reductase (316 aa).

Cys12 contributes to the [4Fe-4S] cluster binding site. Positions 41 and 74 each coordinate (2E)-4-hydroxy-3-methylbut-2-enyl diphosphate. Dimethylallyl diphosphate is bound by residues His41 and His74. Positions 41 and 74 each coordinate isopentenyl diphosphate. Cys96 contributes to the [4Fe-4S] cluster binding site. A (2E)-4-hydroxy-3-methylbut-2-enyl diphosphate-binding site is contributed by His124. His124 contacts dimethylallyl diphosphate. His124 contacts isopentenyl diphosphate. Catalysis depends on Glu126, which acts as the Proton donor. A (2E)-4-hydroxy-3-methylbut-2-enyl diphosphate-binding site is contributed by Thr167. A [4Fe-4S] cluster-binding site is contributed by Cys197. Residues Ser225, Ser226, Asn227, and Ser269 each coordinate (2E)-4-hydroxy-3-methylbut-2-enyl diphosphate. Dimethylallyl diphosphate-binding residues include Ser225, Ser226, Asn227, and Ser269. Positions 225, 226, 227, and 269 each coordinate isopentenyl diphosphate.

The protein belongs to the IspH family. As to quaternary structure, homodimer. [4Fe-4S] cluster serves as cofactor.

The enzyme catalyses isopentenyl diphosphate + 2 oxidized [2Fe-2S]-[ferredoxin] + H2O = (2E)-4-hydroxy-3-methylbut-2-enyl diphosphate + 2 reduced [2Fe-2S]-[ferredoxin] + 2 H(+). It catalyses the reaction dimethylallyl diphosphate + 2 oxidized [2Fe-2S]-[ferredoxin] + H2O = (2E)-4-hydroxy-3-methylbut-2-enyl diphosphate + 2 reduced [2Fe-2S]-[ferredoxin] + 2 H(+). It participates in isoprenoid biosynthesis; dimethylallyl diphosphate biosynthesis; dimethylallyl diphosphate from (2E)-4-hydroxy-3-methylbutenyl diphosphate: step 1/1. Its pathway is isoprenoid biosynthesis; isopentenyl diphosphate biosynthesis via DXP pathway; isopentenyl diphosphate from 1-deoxy-D-xylulose 5-phosphate: step 6/6. Its function is as follows. Catalyzes the conversion of 1-hydroxy-2-methyl-2-(E)-butenyl 4-diphosphate (HMBPP) into a mixture of isopentenyl diphosphate (IPP) and dimethylallyl diphosphate (DMAPP). Acts in the terminal step of the DOXP/MEP pathway for isoprenoid precursor biosynthesis. This is 4-hydroxy-3-methylbut-2-enyl diphosphate reductase from Salmonella typhi.